Here is a 217-residue protein sequence, read N- to C-terminus: Resolvase homolog YneB (217 aa).

The region spanning 2-147 (KALIYARVST…RGMKRAVKNG (146 aa)) is the Resolvase/invertase-type recombinase catalytic domain. S10 serves as the catalytic O-(5'-phospho-DNA)-serine intermediate.

The protein belongs to the site-specific recombinase resolvase family.

This chain is Resolvase homolog YneB (yneB), found in Bacillus subtilis (strain 168).